A 179-amino-acid chain; its full sequence is RNA pyrophosphohydrolase (179 aa).

The Nudix hydrolase domain maps to 6 to 149 (GYRANVGIVI…KKPIYEDMLK (144 aa)). A Nudix box motif is present at residues 38 to 59 (GGIDFGESELDALFRELNEEIG).

Belongs to the Nudix hydrolase family. RppH subfamily. The cofactor is a divalent metal cation.

In terms of biological role, accelerates the degradation of transcripts by removing pyrophosphate from the 5'-end of triphosphorylated RNA, leading to a more labile monophosphorylated state that can stimulate subsequent ribonuclease cleavage. In Ruthia magnifica subsp. Calyptogena magnifica, this protein is RNA pyrophosphohydrolase.